The primary structure comprises 147 residues: Globin (147 aa).

Residues 1-147 (GLDGAQKTAL…LLTMLIKAHV (147 aa)) form the Globin domain. The heme b site is built by H66 and H98.

This sequence belongs to the globin family. Homodimer.

Its subcellular location is the cytoplasm. In Busycotypus canaliculatus (Channeled whelk), this protein is Globin.